The sequence spans 598 residues: Thiol:disulfide interchange protein DsbD (598 aa).

A signal peptide spans 1 to 21; sequence MRALLTFFVAGLLVLSSPAMA. The cysteines at positions 130 and 136 are disulfide-linked. The segment at 158–180 is disordered; it reads TMPTQTASPLDTSTANTSTPQPL. The span at 159-180 shows a compositional bias: polar residues; the sequence is MPTQTASPLDTSTANTSTPQPL. The next 8 helical transmembrane spans lie at 198–220, 240–262, 274–296, 324–346, 353–375, 385–407, 414–431, and 446–468; these read LLFL…YPIL, LVYV…SAGL, LIGL…TLQL, AISG…LYVA, TGGV…VAVF, GWMD…FLLE, WSTA…GWLY, and AVGI…YWFA. Cys-212 and Cys-333 are joined by a disulfide. In terms of domain architecture, Thioredoxin spans 456–598; sequence FASAQPALNY…FLEHIQRISN (143 aa). Cys-513 and Cys-516 are oxidised to a cystine.

The protein belongs to the thioredoxin family. DsbD subfamily.

The protein localises to the cell inner membrane. It carries out the reaction [protein]-dithiol + NAD(+) = [protein]-disulfide + NADH + H(+). The catalysed reaction is [protein]-dithiol + NADP(+) = [protein]-disulfide + NADPH + H(+). In terms of biological role, required to facilitate the formation of correct disulfide bonds in some periplasmic proteins and for the assembly of the periplasmic c-type cytochromes. Acts by transferring electrons from cytoplasmic thioredoxin to the periplasm. This transfer involves a cascade of disulfide bond formation and reduction steps. In Vibrio vulnificus (strain YJ016), this protein is Thiol:disulfide interchange protein DsbD.